A 303-amino-acid polypeptide reads, in one-letter code: ASC1-like protein (303 aa).

Transmembrane regions (helical) follow at residues 19–39, 81–101, 127–147, 153–173, 212–232, and 255–275; these read YEDFAVLPLFALFFPSVRFLL, CIYFLSAEVFALVVTYNEPWF, ALYMYTGGFYTYSIFALIFWE, FGVSMSHHVATAILIVLSYNI, YLCLSWIILRLIYYPFWVLWS, and YIFNSLLFCLLVLHIYWWVLI. The TLC domain maps to 72–284; sequence RKFKESAWKC…IYRMLVKQIQ (213 aa).

The protein resides in the endoplasmic reticulum membrane. Mediates resistance to sphinganine-analog mycotoxins (SAMs) by restoring the sphingolipid biosynthesis. Could salvage the transport of GPI-anchored proteins from the endoplasmic reticulum to the Golgi apparatus in ceramides-depleted cells after SAM exposure. The sequence is that of ASC1-like protein from Solanum lycopersicum (Tomato).